The chain runs to 203 residues: Small ribosomal subunit protein uS2 (203 aa).

Belongs to the universal ribosomal protein uS2 family.

The polypeptide is Small ribosomal subunit protein uS2 (Methanopyrus kandleri (strain AV19 / DSM 6324 / JCM 9639 / NBRC 100938)).